Consider the following 191-residue polypeptide: Peptidyl-tRNA hydrolase (191 aa).

Tyr14 contributes to the tRNA binding site. His19 (proton acceptor) is an active-site residue. 3 residues coordinate tRNA: Phe64, Asn66, and Asn113.

Belongs to the PTH family. As to quaternary structure, monomer.

The protein localises to the cytoplasm. The catalysed reaction is an N-acyl-L-alpha-aminoacyl-tRNA + H2O = an N-acyl-L-amino acid + a tRNA + H(+). Its function is as follows. Hydrolyzes ribosome-free peptidyl-tRNAs (with 1 or more amino acids incorporated), which drop off the ribosome during protein synthesis, or as a result of ribosome stalling. In terms of biological role, catalyzes the release of premature peptidyl moieties from peptidyl-tRNA molecules trapped in stalled 50S ribosomal subunits, and thus maintains levels of free tRNAs and 50S ribosomes. This chain is Peptidyl-tRNA hydrolase, found in Fusobacterium nucleatum subsp. nucleatum (strain ATCC 25586 / DSM 15643 / BCRC 10681 / CIP 101130 / JCM 8532 / KCTC 2640 / LMG 13131 / VPI 4355).